Reading from the N-terminus, the 216-residue chain is Orotidine 5'-phosphate decarboxylase (216 aa).

Residues Asp-12, Lys-34, 62 to 71, Ser-119, 172 to 182, Gly-194, and Arg-195 each bind substrate; these read DFKVADIDAT and PGVGFQGGNAK. Lys-64 acts as the Proton donor in catalysis.

Belongs to the OMP decarboxylase family. Type 1 subfamily. As to quaternary structure, homodimer.

It carries out the reaction orotidine 5'-phosphate + H(+) = UMP + CO2. It functions in the pathway pyrimidine metabolism; UMP biosynthesis via de novo pathway; UMP from orotate: step 2/2. Its function is as follows. Catalyzes the decarboxylation of orotidine 5'-monophosphate (OMP) to uridine 5'-monophosphate (UMP). This is Orotidine 5'-phosphate decarboxylase from Methanosphaera stadtmanae (strain ATCC 43021 / DSM 3091 / JCM 11832 / MCB-3).